Reading from the N-terminus, the 395-residue chain is S-adenosylmethionine synthase (395 aa).

Histidine 15 serves as a coordination point for ATP. Aspartate 17 contacts Mg(2+). Glutamate 43 is a K(+) binding site. Positions 56 and 99 each coordinate L-methionine. Residues 99-109 (QSPEIAQGVDR) form a flexible loop region. ATP is bound by residues 164-166 (DAK), 230-231 (RF), aspartate 239, 245-246 (RK), alanine 262, and lysine 266. L-methionine is bound at residue aspartate 239. Lysine 270 is an L-methionine binding site.

Belongs to the AdoMet synthase family. Homotetramer; dimer of dimers. The cofactor is Mg(2+). K(+) serves as cofactor.

The protein resides in the cytoplasm. The enzyme catalyses L-methionine + ATP + H2O = S-adenosyl-L-methionine + phosphate + diphosphate. It functions in the pathway amino-acid biosynthesis; S-adenosyl-L-methionine biosynthesis; S-adenosyl-L-methionine from L-methionine: step 1/1. In terms of biological role, catalyzes the formation of S-adenosylmethionine (AdoMet) from methionine and ATP. The overall synthetic reaction is composed of two sequential steps, AdoMet formation and the subsequent tripolyphosphate hydrolysis which occurs prior to release of AdoMet from the enzyme. In Colwellia psychrerythraea (strain 34H / ATCC BAA-681) (Vibrio psychroerythus), this protein is S-adenosylmethionine synthase.